A 1425-amino-acid chain; its full sequence is Neuropathy target esterase sws (1425 aa).

Topologically, residues 1–34 (MDVLEMLRASASGSYNTIFSDAWCQYVSKQITAT) are lumenal. The helical transmembrane segment at 35 to 55 (VYMYFALVMMSLLFIAWFLYF) threads the bilayer. The Cytoplasmic segment spans residues 56–1425 (KRMARLRLRD…RSSPNNETKN (1370 aa)). 174–301 (IFGHFEKPVF…IRVIQVIMIR (128 aa)) is a binding site for a nucleoside 3',5'-cyclic phosphate. Composition is skewed to polar residues over residues 332-348 (TMSG…SRQA) and 357-366 (SQMNLMQSAV). The tract at residues 332 to 410 (TMSGPINSQT…NPDGSFHGTT (79 aa)) is disordered. Low complexity predominate over residues 367-381 (SGTGSSGVSVTVTRP). A phosphoserine mark is found at serine 444 and serine 453. A nucleoside 3',5'-cyclic phosphate is bound by residues 482 to 609 (ELGL…VVRR) and 598 to 727 (IVLD…HRFL). Residues 952-1118 (LVLGGGGARG…VNNLPADVMH (167 aa)) form the PNPLA domain. Residues 956-961 (GGGARG) carry the GXGXXG motif. Positions 983 to 987 (GVSIG) match the GXSXG motif. The Nucleophile role is filled by serine 985. The active-site Proton acceptor is aspartate 1105. Positions 1105 to 1107 (DGG) match the DGA/G motif. A Phosphoserine modification is found at serine 1160. Residues 1330–1425 (LERKTDKSTQ…RSSPNNETKN (96 aa)) are disordered. Residues 1337–1347 (STQSSPPSNSR) are compositionally biased toward low complexity. Positions 1348-1358 (SDMRGKEEARH) are enriched in basic and acidic residues. Over residues 1380–1403 (TKTQTGQEQELQQEQQDQGATAEQ) the composition is skewed to low complexity. Residues 1404–1416 (LVDKDKEENKENR) are compositionally biased toward basic and acidic residues.

This sequence belongs to the NTE family. In terms of assembly, interacts with Pka-C3; interaction inhibits the catalytic function of Pka-C3 and the esterase activity of sws. As to expression, isoform A and isoform B are expressed in the entire brain cortex; cortical cell bodies of adult brain. Sws and Pka-C3 are colocalized in all neurons.

It is found in the endoplasmic reticulum membrane. The enzyme catalyses a 1-acyl-sn-glycero-3-phosphocholine + H2O = sn-glycerol 3-phosphocholine + a fatty acid + H(+). Its function is as follows. Phospholipase B that deacylates intracellular phosphatidylcholine (PtdCho), generating glycerophosphocholine (GroPtdCho). This deacylation occurs at both sn-2 and sn-1 positions of PtdCho. Its specific chemical modification by certain organophosphorus (OP) compounds leads to distal axonopathy. Plays a role in the signaling mechanism between neurons and glia that regulates glia wrapping during development of the adult brain. Essential for membrane lipid homeostasis and cell survival in both neurons and glia of the adult brain. In Drosophila melanogaster (Fruit fly), this protein is Neuropathy target esterase sws (sws).